The following is a 409-amino-acid chain: Argininosuccinate synthase (409 aa).

Residue alanine 9–serine 17 coordinates ATP. Tyrosine 86 is a binding site for L-citrulline. Residue glycine 116 coordinates ATP. The L-aspartate site is built by threonine 118, asparagine 122, and aspartate 123. Asparagine 122 lines the L-citrulline pocket. Positions 126, 174, 183, 259, and 271 each coordinate L-citrulline.

Belongs to the argininosuccinate synthase family. Type 1 subfamily. As to quaternary structure, homotetramer.

It is found in the cytoplasm. It catalyses the reaction L-citrulline + L-aspartate + ATP = 2-(N(omega)-L-arginino)succinate + AMP + diphosphate + H(+). Its pathway is amino-acid biosynthesis; L-arginine biosynthesis; L-arginine from L-ornithine and carbamoyl phosphate: step 2/3. This chain is Argininosuccinate synthase, found in Halalkalibacterium halodurans (strain ATCC BAA-125 / DSM 18197 / FERM 7344 / JCM 9153 / C-125) (Bacillus halodurans).